We begin with the raw amino-acid sequence, 122 residues long: Small ribosomal subunit protein uS13 (122 aa).

Residues 95–122 (GLPVRGQRTHTNARTRKGPRRGTVGKKK) are disordered.

Belongs to the universal ribosomal protein uS13 family. As to quaternary structure, part of the 30S ribosomal subunit. Forms a loose heterodimer with protein S19. Forms two bridges to the 50S subunit in the 70S ribosome.

In terms of biological role, located at the top of the head of the 30S subunit, it contacts several helices of the 16S rRNA. In the 70S ribosome it contacts the 23S rRNA (bridge B1a) and protein L5 of the 50S subunit (bridge B1b), connecting the 2 subunits; these bridges are implicated in subunit movement. Contacts the tRNAs in the A and P-sites. The sequence is that of Small ribosomal subunit protein uS13 from Nitratidesulfovibrio vulgaris (strain ATCC 29579 / DSM 644 / CCUG 34227 / NCIMB 8303 / VKM B-1760 / Hildenborough) (Desulfovibrio vulgaris).